Reading from the N-terminus, the 353-residue chain is Rhodopsin (353 aa).

The Extracellular portion of the chain corresponds to 1 to 36 (MNGTEGENFYIPFSNKTGLARSPFEYPQYYLAEPWK). N-linked (GlcNAc...) asparagine glycans are attached at residues Asn2 and Asn15. The helical transmembrane segment at 37–61 (YSVLAAYMFFLILVGFPVNFLTLFV) threads the bilayer. Over 62–73 (TVQHKKLRTPLN) the chain is Cytoplasmic. A helical transmembrane segment spans residues 74-96 (YILLNLAVANLFMVLFGFTLTMY). At 97 to 110 (SSMNGYFVFGPTMC) the chain is on the extracellular side. Cys110 and Cys187 are oxidised to a cystine. Residues 111–133 (NFEGFFATLGGEMSLWSLVVLAI) form a helical membrane-spanning segment. Positions 134-136 (ERY) match the 'Ionic lock' involved in activated form stabilization motif. Residues 134-152 (ERYIVICKPMGNFRFGSTH) lie on the Cytoplasmic side of the membrane. A helical transmembrane segment spans residues 153-173 (AYMGVAFTWFMALSCAAPPLV). Residues 174-202 (GWSRYLPEGMQCSCGPDYYTLNPNFNNES) are Extracellular-facing. Residues 203 to 224 (FVIYMFLVHFIIPFIVIFFCYG) form a helical membrane-spanning segment. At 225–252 (RLLCTVKEAAAAQQESASTQKAEKEVTR) the chain is on the cytoplasmic side. Residues 253-274 (MVVLMVIGFLVCWVPYASVAFY) traverse the membrane as a helical segment. At 275–286 (IFTHQGSDFGAT) the chain is on the extracellular side. The helical transmembrane segment at 287 to 308 (FMTVPAFFAKTSALYNPIIYIL) threads the bilayer. N6-(retinylidene)lysine is present on Lys296. Residues 309 to 353 (MNKQFRNCMITTLCCGKNPLGDEDSGASTSKTEVSSVSTSQVSPA) lie on the Cytoplasmic side of the membrane. Residues 330–353 (DEDSGASTSKTEVSSVSTSQVSPA) form a disordered region. Residues 336–353 (STSKTEVSSVSTSQVSPA) are compositionally biased toward low complexity.

Belongs to the G-protein coupled receptor 1 family. Opsin subfamily. Post-translationally, phosphorylated on some or all of the serine and threonine residues present in the C-terminal region. Contains one covalently linked retinal chromophore.

Its subcellular location is the membrane. The protein resides in the cell projection. It localises to the cilium. The protein localises to the photoreceptor outer segment. Its function is as follows. Photoreceptor required for image-forming vision at low light intensity. While most salt water fish species use retinal as chromophore, most freshwater fish use 3-dehydroretinal, or a mixture of retinal and 3-dehydroretinal. Light-induced isomerization of 11-cis to all-trans retinal triggers a conformational change that activates signaling via G-proteins. Subsequent receptor phosphorylation mediates displacement of the bound G-protein alpha subunit by arrestin and terminates signaling. In Petromyzon marinus (Sea lamprey), this protein is Rhodopsin (RHO).